The following is a 228-amino-acid chain: UPF0328 protein ECU07_0040 (228 aa).

Belongs to the UPF0328 family.

This chain is UPF0328 protein ECU07_0040, found in Encephalitozoon cuniculi (strain GB-M1) (Microsporidian parasite).